A 229-amino-acid polypeptide reads, in one-letter code: Enolase-phosphatase E1 (229 aa).

This sequence belongs to the HAD-like hydrolase superfamily. MasA/MtnC family. In terms of assembly, monomer. Mg(2+) is required as a cofactor.

It carries out the reaction 5-methylsulfanyl-2,3-dioxopentyl phosphate + H2O = 1,2-dihydroxy-5-(methylsulfanyl)pent-1-en-3-one + phosphate. The protein operates within amino-acid biosynthesis; L-methionine biosynthesis via salvage pathway; L-methionine from S-methyl-5-thio-alpha-D-ribose 1-phosphate: step 3/6. Its pathway is amino-acid biosynthesis; L-methionine biosynthesis via salvage pathway; L-methionine from S-methyl-5-thio-alpha-D-ribose 1-phosphate: step 4/6. Functionally, bifunctional enzyme that catalyzes the enolization of 2,3-diketo-5-methylthiopentyl-1-phosphate (DK-MTP-1-P) into the intermediate 2-hydroxy-3-keto-5-methylthiopentenyl-1-phosphate (HK-MTPenyl-1-P), which is then dephosphorylated to form the acireductone 1,2-dihydroxy-3-keto-5-methylthiopentene (DHK-MTPene). In Pectobacterium carotovorum subsp. carotovorum (strain PC1), this protein is Enolase-phosphatase E1.